We begin with the raw amino-acid sequence, 500 residues long: Lysine--tRNA ligase (500 aa).

2 residues coordinate Mg(2+): Glu410 and Glu417.

The protein belongs to the class-II aminoacyl-tRNA synthetase family. Homodimer. It depends on Mg(2+) as a cofactor.

The protein resides in the cytoplasm. It catalyses the reaction tRNA(Lys) + L-lysine + ATP = L-lysyl-tRNA(Lys) + AMP + diphosphate. The polypeptide is Lysine--tRNA ligase (Shewanella baltica (strain OS155 / ATCC BAA-1091)).